A 459-amino-acid chain; its full sequence is MTETVTTTSSDKSEKKNYLFYTSPNHRPPTVVRAEGVYLYLEDGTRIMDATGGAAVACLGHGNKEVIDAMHKQSEKVCYIHSMGFSNEPADKLANLLVSEHPDVFARAYFANSGSEAVETCLKLILQYWQLVGEKQRCHIIARKQGYHGNTLFALSVGGMKPRKQPYEGVFSHTTSHVSPCFEYRYKENGETTEEYVARLAKELEDEILRVGPEKVAAFVAETVSGACTGCATPVPGYFKAMRKVCDKYGVIFYLDEVMSGIGRTGTMHAWEQEGVTPDIQSIAKCLGGGYQPISGALVGHRIMNVFEQKDAAMAGFFTYQAHPIACSAALAVQTILRRDHLVERAAEMGKYLSEKLHETFDSHPNVGNIRGRGLFWGLEIVKDKATKECFPPEYKVGSLANKIGCEHGVFVYPGMGTIDGTRGDHVLLAPPYIITREQIDELVEALSKTITSTVAALP.

The residue at position 285 (Lys285) is an N6-(pyridoxal phosphate)lysine.

The protein belongs to the class-III pyridoxal-phosphate-dependent aminotransferase family.

The protein resides in the cytoplasm. This is an uncharacterized protein from Schizosaccharomyces pombe (strain 972 / ATCC 24843) (Fission yeast).